Reading from the N-terminus, the 922-residue chain is Isoleucine--tRNA ligase (922 aa).

Positions 57-67 (PYANGDIHLGH) match the 'HIGH' region motif. Residue Glu-553 participates in L-isoleucyl-5'-AMP binding. The short motif at 594 to 598 (KMSKS) is the 'KMSKS' region element. Lys-597 serves as a coordination point for ATP. 4 residues coordinate Zn(2+): Cys-892, Cys-895, Cys-912, and Cys-915.

This sequence belongs to the class-I aminoacyl-tRNA synthetase family. IleS type 1 subfamily. As to quaternary structure, monomer. Requires Zn(2+) as cofactor.

The protein resides in the cytoplasm. It carries out the reaction tRNA(Ile) + L-isoleucine + ATP = L-isoleucyl-tRNA(Ile) + AMP + diphosphate. In terms of biological role, catalyzes the attachment of isoleucine to tRNA(Ile). As IleRS can inadvertently accommodate and process structurally similar amino acids such as valine, to avoid such errors it has two additional distinct tRNA(Ile)-dependent editing activities. One activity is designated as 'pretransfer' editing and involves the hydrolysis of activated Val-AMP. The other activity is designated 'posttransfer' editing and involves deacylation of mischarged Val-tRNA(Ile). This chain is Isoleucine--tRNA ligase, found in Desulfitobacterium hafniense (strain Y51).